The primary structure comprises 270 residues: Orotidine 5'-phosphate decarboxylase (270 aa).

K89 acts as the Proton donor in catalysis.

The protein belongs to the OMP decarboxylase family. Type 2 subfamily.

The enzyme catalyses orotidine 5'-phosphate + H(+) = UMP + CO2. It functions in the pathway pyrimidine metabolism; UMP biosynthesis via de novo pathway; UMP from orotate: step 2/2. The protein is Orotidine 5'-phosphate decarboxylase of Dehalococcoides mccartyi (strain CBDB1).